The chain runs to 131 residues: Small ribosomal subunit protein uS8 (131 aa).

It belongs to the universal ribosomal protein uS8 family. Part of the 30S ribosomal subunit. Contacts proteins S5 and S12.

One of the primary rRNA binding proteins, it binds directly to 16S rRNA central domain where it helps coordinate assembly of the platform of the 30S subunit. This is Small ribosomal subunit protein uS8 from Acidithiobacillus ferrooxidans (strain ATCC 23270 / DSM 14882 / CIP 104768 / NCIMB 8455) (Ferrobacillus ferrooxidans (strain ATCC 23270)).